The following is a 597-amino-acid chain: 2-succinyl-5-enolpyruvyl-6-hydroxy-3-cyclohexene-1-carboxylate synthase (597 aa).

The protein belongs to the TPP enzyme family. MenD subfamily. Homodimer. Requires Mg(2+) as cofactor. Mn(2+) is required as a cofactor. The cofactor is thiamine diphosphate.

It catalyses the reaction isochorismate + 2-oxoglutarate + H(+) = 5-enolpyruvoyl-6-hydroxy-2-succinyl-cyclohex-3-ene-1-carboxylate + CO2. It participates in quinol/quinone metabolism; 1,4-dihydroxy-2-naphthoate biosynthesis; 1,4-dihydroxy-2-naphthoate from chorismate: step 2/7. The protein operates within cofactor biosynthesis; phylloquinone biosynthesis. Its function is as follows. Catalyzes the thiamine diphosphate-dependent decarboxylation of 2-oxoglutarate and the subsequent addition of the resulting succinic semialdehyde-thiamine pyrophosphate anion to isochorismate to yield 2-succinyl-5-enolpyruvyl-6-hydroxy-3-cyclohexene-1-carboxylate (SEPHCHC). In Synechococcus sp. (strain JA-3-3Ab) (Cyanobacteria bacterium Yellowstone A-Prime), this protein is 2-succinyl-5-enolpyruvyl-6-hydroxy-3-cyclohexene-1-carboxylate synthase.